A 224-amino-acid chain; its full sequence is Orotate phosphoribosyltransferase (224 aa).

K29 lines the 5-phospho-alpha-D-ribose 1-diphosphate pocket. 37 to 38 is an orotate binding site; that stretch reads FF. 5-phospho-alpha-D-ribose 1-diphosphate contacts are provided by residues 75 to 76, R105, K106, K109, H111, and 130 to 138; these read YK and DDVITAGTS. 2 residues coordinate orotate: T134 and R162.

Belongs to the purine/pyrimidine phosphoribosyltransferase family. PyrE subfamily. As to quaternary structure, homodimer. The cofactor is Mg(2+).

The catalysed reaction is orotidine 5'-phosphate + diphosphate = orotate + 5-phospho-alpha-D-ribose 1-diphosphate. The protein operates within pyrimidine metabolism; UMP biosynthesis via de novo pathway; UMP from orotate: step 1/2. Its function is as follows. Catalyzes the transfer of a ribosyl phosphate group from 5-phosphoribose 1-diphosphate to orotate, leading to the formation of orotidine monophosphate (OMP). This Bordetella parapertussis (strain 12822 / ATCC BAA-587 / NCTC 13253) protein is Orotate phosphoribosyltransferase.